The following is a 246-amino-acid chain: Small ribosomal subunit protein uS2 (246 aa).

The protein belongs to the universal ribosomal protein uS2 family.

In Stutzerimonas stutzeri (strain A1501) (Pseudomonas stutzeri), this protein is Small ribosomal subunit protein uS2.